The following is a 698-amino-acid chain: Serotransferrin (698 aa).

A signal peptide spans Met-1 to Ala-19. Transferrin-like domains lie at Val-25–Glu-347 and Val-361–Lys-683. Intrachain disulfides connect Cys-28–Cys-67 and Cys-38–Cys-58. Arg-42 bears the Dimethylated arginine mark. O-linked (GalNAc...) serine glycosylation occurs at Ser-51. Asp-82 and Tyr-114 together coordinate Fe(3+). Cystine bridges form between Cys-137/Cys-213, Cys-156/Cys-350, Cys-177/Cys-193, Cys-180/Cys-196, Cys-190/Cys-198, Cys-246/Cys-260, Cys-358/Cys-615, Cys-364/Cys-396, Cys-374/Cys-387, Cys-421/Cys-693, Cys-437/Cys-656, Cys-469/Cys-542, Cys-493/Cys-684, Cys-503/Cys-517, Cys-514/Cys-525, Cys-582/Cys-596, and Cys-634/Cys-639. 4 residues coordinate hydrogencarbonate: Thr-139, Arg-143, Ala-145, and Gly-146. Tyr-207 is a binding site for Fe(3+). A Fe(3+)-binding site is contributed by His-268. Ser-389 carries the post-translational modification Phosphoserine. Fe(3+)-binding residues include Asp-411 and Tyr-445. Residues Thr-471, Arg-475, Ala-477, and Gly-478 each coordinate hydrogencarbonate. Residue Tyr-536 participates in Fe(3+) binding. His-604 lines the Fe(3+) pocket. Asn-630 is a glycosylation site (N-linked (GlcNAc...) asparagine). Ser-685 is modified (phosphoserine).

It belongs to the transferrin family. In terms of assembly, monomer. Part of a complex composed of SLC40A1/ferroportin, TF/transferrin and HEPH/hephaestin that transfers iron from cells to transferrin. As to expression, expressed by the liver and secreted in plasma.

The protein localises to the secreted. Its function is as follows. Transferrins are iron binding transport proteins which can bind two Fe(3+) ions in association with the binding of an anion, usually bicarbonate. It is responsible for the transport of iron from sites of absorption and heme degradation to those of storage and utilization. Serum transferrin may also have a further role in stimulating cell proliferation. This chain is Serotransferrin (TF), found in Pan troglodytes (Chimpanzee).